The sequence spans 280 residues: Acetyl-coenzyme A carboxylase carboxyl transferase subunit beta (280 aa).

The CoA carboxyltransferase N-terminal domain maps to 28-280 (LFLACPYCGA…IVRLHTAEAE (253 aa)). 4 residues coordinate Zn(2+): Cys32, Cys35, Cys50, and Cys53. The C4-type zinc-finger motif lies at 32 to 53 (CPYCGAQMYNKQLGKYRVCAKC).

The protein belongs to the AccD/PCCB family. Acetyl-CoA carboxylase is a heterohexamer composed of biotin carboxyl carrier protein (AccB), biotin carboxylase (AccC) and two subunits each of ACCase subunit alpha (AccA) and ACCase subunit beta (AccD). The cofactor is Zn(2+).

It localises to the cytoplasm. It carries out the reaction N(6)-carboxybiotinyl-L-lysyl-[protein] + acetyl-CoA = N(6)-biotinyl-L-lysyl-[protein] + malonyl-CoA. It participates in lipid metabolism; malonyl-CoA biosynthesis; malonyl-CoA from acetyl-CoA: step 1/1. Component of the acetyl coenzyme A carboxylase (ACC) complex. Biotin carboxylase (BC) catalyzes the carboxylation of biotin on its carrier protein (BCCP) and then the CO(2) group is transferred by the transcarboxylase to acetyl-CoA to form malonyl-CoA. This is Acetyl-coenzyme A carboxylase carboxyl transferase subunit beta from Leuconostoc mesenteroides subsp. mesenteroides (strain ATCC 8293 / DSM 20343 / BCRC 11652 / CCM 1803 / JCM 6124 / NCDO 523 / NBRC 100496 / NCIMB 8023 / NCTC 12954 / NRRL B-1118 / 37Y).